Here is a 581-residue protein sequence, read N- to C-terminus: Adenine deaminase (581 aa).

This sequence belongs to the metallo-dependent hydrolases superfamily. Adenine deaminase family. Mn(2+) serves as cofactor.

It catalyses the reaction adenine + H2O + H(+) = hypoxanthine + NH4(+). This Brucella abortus (strain 2308) protein is Adenine deaminase.